A 160-amino-acid chain; its full sequence is Allophycocyanin alpha chain (160 aa).

Residue N70 is modified to N4-methylasparagine. C80 contributes to the (2R,3E)-phycocyanobilin binding site.

It belongs to the phycobiliprotein family. Component of the phycobilisome. Heterodimer of an alpha and a beta chain. Contains one covalently linked phycocyanobilin chromophore.

It localises to the cellular thylakoid membrane. In terms of biological role, light-harvesting photosynthetic bile pigment-protein from the phycobiliprotein complex. Allophycocyanin has a maximum absorption at approximately 650 nanometers. The polypeptide is Allophycocyanin alpha chain (apcA) (Mastigocladus laminosus (Fischerella sp.)).